The chain runs to 117 residues: Large ribosomal subunit protein uL24 (117 aa).

The protein belongs to the universal ribosomal protein uL24 family. As to quaternary structure, part of the 50S ribosomal subunit.

Functionally, one of two assembly initiator proteins, it binds directly to the 5'-end of the 23S rRNA, where it nucleates assembly of the 50S subunit. One of the proteins that surrounds the polypeptide exit tunnel on the outside of the subunit. The polypeptide is Large ribosomal subunit protein uL24 (Nostoc punctiforme (strain ATCC 29133 / PCC 73102)).